A 461-amino-acid chain; its full sequence is tRNA modification GTPase MnmE (461 aa).

Residues K32, E89, and K128 each contribute to the (6S)-5-formyl-5,6,7,8-tetrahydrofolate site. In terms of domain architecture, TrmE-type G spans 224 to 387 (GHALSIVGKP…LGQKISAFFP (164 aa)). N234 is a K(+) binding site. Residues 234–239 (NAGKSS), 253–259 (SDIKGTT), and 278–281 (DTAG) contribute to the GTP site. S238 provides a ligand contact to Mg(2+). Residues S253, I255, and T258 each contribute to the K(+) site. Residue T259 participates in Mg(2+) binding. A (6S)-5-formyl-5,6,7,8-tetrahydrofolate-binding site is contributed by K461.

This sequence belongs to the TRAFAC class TrmE-Era-EngA-EngB-Septin-like GTPase superfamily. TrmE GTPase family. In terms of assembly, homodimer. Heterotetramer of two MnmE and two MnmG subunits. The cofactor is K(+).

Its subcellular location is the cytoplasm. Functionally, exhibits a very high intrinsic GTPase hydrolysis rate. Involved in the addition of a carboxymethylaminomethyl (cmnm) group at the wobble position (U34) of certain tRNAs, forming tRNA-cmnm(5)s(2)U34. The polypeptide is tRNA modification GTPase MnmE (Helicobacter pylori (strain HPAG1)).